A 339-amino-acid polypeptide reads, in one-letter code: Probable protein phosphatase 2C 28 (339 aa).

The 248-residue stretch at 87–334 (DHGYHLVKGQ…DDISCVVVSF (248 aa)) folds into the PPM-type phosphatase domain. Positions 124, 125, 286, and 325 each coordinate Mn(2+).

Belongs to the PP2C family. Mg(2+) is required as a cofactor. The cofactor is Mn(2+).

The enzyme catalyses O-phospho-L-seryl-[protein] + H2O = L-seryl-[protein] + phosphate. The catalysed reaction is O-phospho-L-threonyl-[protein] + H2O = L-threonyl-[protein] + phosphate. The sequence is that of Probable protein phosphatase 2C 28 from Arabidopsis thaliana (Mouse-ear cress).